The primary structure comprises 192 residues: MEFIVEKIGMSRTIGTKSEAVTLLRVLGAKVCEIYDNGKALVAYSQGKSVNKAIAGQQKKYSLSKEFNRFATLKVSNKEVGELDVASLSEAKRVQVSFKTKGRGFSGAMKRWNFQGGPGAHGSRFHRRLGSIGNREWPGRVQPGKKMAGHYGNELVSAKNDIMSFDKQSAILVLKGSVAGFNGAFGRIQIIK.

This sequence belongs to the universal ribosomal protein uL3 family. As to quaternary structure, part of the 50S ribosomal subunit. Forms a cluster with proteins L14 and L19.

One of the primary rRNA binding proteins, it binds directly near the 3'-end of the 23S rRNA, where it nucleates assembly of the 50S subunit. The chain is Large ribosomal subunit protein uL3 (rplC) from Helicobacter hepaticus (strain ATCC 51449 / 3B1).